The primary structure comprises 1400 residues: DNA-directed RNA polymerase subunit beta' (1400 aa).

The Zn(2+) site is built by Cys-71, Cys-73, Cys-86, and Cys-89. Mg(2+) contacts are provided by Asp-462, Asp-464, and Asp-466. Zn(2+)-binding residues include Cys-811, Cys-885, Cys-892, and Cys-895.

It belongs to the RNA polymerase beta' chain family. The RNAP catalytic core consists of 2 alpha, 1 beta, 1 beta' and 1 omega subunit. When a sigma factor is associated with the core the holoenzyme is formed, which can initiate transcription. Requires Mg(2+) as cofactor. It depends on Zn(2+) as a cofactor.

It carries out the reaction RNA(n) + a ribonucleoside 5'-triphosphate = RNA(n+1) + diphosphate. Its function is as follows. DNA-dependent RNA polymerase catalyzes the transcription of DNA into RNA using the four ribonucleoside triphosphates as substrates. This chain is DNA-directed RNA polymerase subunit beta', found in Brucella anthropi (strain ATCC 49188 / DSM 6882 / CCUG 24695 / JCM 21032 / LMG 3331 / NBRC 15819 / NCTC 12168 / Alc 37) (Ochrobactrum anthropi).